Here is a 177-residue protein sequence, read N- to C-terminus: Transmembrane protein 190 (177 aa).

A signal peptide spans 1–21 (MLGCGIPALGLLLLLQGSADG). The Extracellular segment spans residues 22–81 (NGIQGFFYPWSCEGDIWDRESCGGQAAIDSPNLCLRLRCCYRNGVCYHQRPDENVRRKHM). In terms of domain architecture, P-type spans 31–71 (WSCEGDIWDRESCGGQAAIDSPNLCLRLRCCYRNGVCYHQR). 3 disulfide bridges follow: cysteine 33-cysteine 61, cysteine 43-cysteine 60, and cysteine 55-cysteine 67. Residues 82–102 (WALVWTCSGLLLLSCSICLFW) form a helical membrane-spanning segment. Residues 103 to 177 (WAKRRDVLHM…EETEGEEEED (75 aa)) lie on the Cytoplasmic side of the membrane. The disordered stretch occupies residues 131 to 177 (KHRGTKKTPSTGSVPVALSKESRDVEGGTEGEGTEEGEETEGEEEED). The span at 157 to 177 (GGTEGEGTEEGEETEGEEEED) shows a compositional bias: acidic residues.

The protein localises to the membrane. The polypeptide is Transmembrane protein 190 (TMEM190) (Homo sapiens (Human)).